The chain runs to 1402 residues: Eukaryotic translation initiation factor 4 gamma 1 (1402 aa).

Disordered regions lie at residues 1–123 (MSGA…SPEP) and 165–402 (HEPN…YEYK). Threonine 11 and threonine 27 each carry phosphothreonine. Low complexity predominate over residues 53 to 64 (GPEHSPSESQPS). Over residues 65–76 (SPSPTPSPPPIL) the composition is skewed to pro residues. Serine 120 is modified (phosphoserine). The span at 238–251 (ASATPPAVPSATPA) shows a compositional bias: low complexity. Over residues 261-275 (QEEEGEEEEEEEEGE) the composition is skewed to acidic residues. Composition is skewed to basic and acidic residues over residues 280–290 (ESDKGGEDLHP) and 324–340 (KELNKKEAVGDLLDAFK). Low complexity predominate over residues 359 to 370 (PTPESEGSSGPS). The segment covering 379–388 (WDAKEDKIHN) has biased composition (basic and acidic residues). Threonine 452 is subject to Phosphothreonine. 4 disordered regions span residues 476-517 (ANLG…PPKG), 536-563 (AEKAWKPSSKRTAADKDRGEEDADGSKT), 600-636 (SKGSLTSSLRRPFQNPTSQWPSQHVPLPHGAESATTE), and 828-1028 (MAKG…KREA). The segment covering 479-488 (GRPALSSRGP) has biased composition (low complexity). Omega-N-methylarginine is present on residues arginine 490 and arginine 499. The segment covering 547-563 (TAADKDRGEEDADGSKT) has biased composition (basic and acidic residues). The MIF4G domain maps to 567–793 (FRRVRSILNK…QDVLDLRQSN (227 aa)). Residues 602 to 621 (GSLTSSLRRPFQNPTSQWPS) are compositionally biased toward polar residues. Residue serine 832 is modified to Phosphoserine. Omega-N-methylarginine occurs at positions 836 and 846. Residues serine 881 and serine 896 each carry the phosphoserine modification. The segment covering 892–913 (GGRLSWGKGSSGSGAKPSDAAS) has biased composition (low complexity). Lysine 899 bears the N6-acetyllysine mark. Polar residues predominate over residues 918–937 (PATSTLNRFSALQQAVPTES). A phosphoserine mark is found at serine 948 and serine 950. Positions 949-981 (LSRERGGKAGEPRRRLERSERGGDRGDRLDRAR) are enriched in basic and acidic residues. A Phosphoserine; by PKC/PRKCA modification is found at serine 988. Positions 989 to 1028 (FSKEVEERSRERPSQPEGLRKAASLTEDRDRGRDAAKREA) are enriched in basic and acidic residues. Phosphoserine is present on residues serine 990, serine 997, and serine 1012. Threonine 1014 carries the phosphothreonine modification. 2 positions are modified to phosphoserine: serine 1034 and serine 1041. Residues 1044–1166 (ELEKKSKAII…PMGELFREIT (123 aa)) enclose the MI domain. The 171-residue stretch at 1231-1401 (EESEAPGQRA…REVEEEESDH (171 aa)) folds into the W2 domain. Serine 1399 is modified (phosphoserine).

This sequence belongs to the eukaryotic initiation factor 4G family. As to quaternary structure, eIF4F is a multi-subunit complex, the composition of which varies with external and internal environmental conditions. It is composed of at least EIF4A, EIF4E (cap-binding) and EIF4G1/EIF4G3. Interacts with eIF3 complex, mutually exclusive with EIF4A1 or EIF4A2, EIF4E and through its N-terminus with PABPC1. Interacts with EIF4E or with EIF1 (mutually exclusive) through a common binding site. Interacts through its C-terminus with the serine/threonine kinases MKNK1, and with MKNK2. Appears to act as a scaffold protein, holding these enzymes in place to phosphorylate EIF4E. Non-phosphorylated EIF4EBP1 competes with EIF4G1/EIF4G3 to interact with EIF4E; insulin stimulated MAP-kinase (MAPK1 and MAPK3) phosphorylation of EIF4EBP1 causes dissociation of the complex allowing EIF4G1/EIF4G3 to bind and consequent initiation of translation. EIF4G1/EIF4G3 interacts with PABPC1 to bring about circularization of the mRNA. Interacts with EIF4E3. Interacts with CIRBP and MIF4GD. Interacts with RBM4. Interacts with HNRNPD/AUF1; the interaction requires RNA. Interacts with DDX3X; the interaction requires RNA. Interacts with DAZAP2. Post-translationally, phosphorylated at multiple sites in vivo. Phosphorylation at Ser-988 by PRKCA induces binding to MKNK1.

It is found in the cytoplasm. The protein resides in the nucleus. Its subcellular location is the stress granule. Its function is as follows. Component of the protein complex eIF4F, which is involved in the recognition of the mRNA cap, ATP-dependent unwinding of 5'-terminal secondary structure and recruitment of mRNA to the ribosome. Exists in two complexes, either with EIF1 or with EIF4E (mutually exclusive). Together with EIF1, is required for leaky scanning, in particular for avoiding cap-proximal start codon. Together with EIF4E, antagonizes the scanning promoted by EIF1-EIF4G1 and locates the start codon (through a TISU element) without scanning. As a member of the eIF4F complex, required for endoplasmic reticulum stress-induced ATF4 mRNA translation. The protein is Eukaryotic translation initiation factor 4 gamma 1 (EIF4G1) of Oryctolagus cuniculus (Rabbit).